Consider the following 397-residue polypeptide: Cathepsin E-B (397 aa).

The signal sequence occupies residues Met1–Gly16. Positions Leu17 to Met49 are cleaved as a propeptide — activation peptide. One can recognise a Peptidase A1 domain in the interval Tyr74–Ala385. N-linked (GlcNAc...) asparagine glycosylation is present at Asn86. Residue Asp92 is part of the active site. Cys105 and Cys110 are joined by a disulfide. Asn130 carries an N-linked (GlcNAc...) asparagine glycan. Cys268 and Cys272 form a disulfide bridge. The active site involves Asp277. An intrachain disulfide couples Cys310 to Cys344.

It belongs to the peptidase A1 family. As to quaternary structure, homodimer; disulfide-linked. Post-translationally, glycosylated. Contains high mannose-type oligosaccharide. As to expression, expressed predominantly in the anterior and posterior adult stomach and at much lower levels in the larval foregut.

The protein resides in the endosome. It catalyses the reaction Similar to cathepsin D, but slightly broader specificity.. May have a role in immune function. Probably involved in the processing of antigenic peptides during MHC class II-mediated antigen presentation. The polypeptide is Cathepsin E-B (ctse-b) (Xenopus laevis (African clawed frog)).